A 62-amino-acid chain; its full sequence is Large ribosomal subunit protein eL24 (62 aa).

Zn(2+) is bound by residues Cys7, Cys10, Cys33, and Cys37. The segment at 7–37 adopts a C4-type zinc-finger fold; the sequence is CSFCGREIEPGTGIMYVKNDGSILWFCSRKC.

Belongs to the eukaryotic ribosomal protein eL24 family. In terms of assembly, part of the 50S ribosomal subunit. Forms a cluster with proteins L3 and L14. It depends on Zn(2+) as a cofactor.

Functionally, binds to the 23S rRNA. The sequence is that of Large ribosomal subunit protein eL24 from Staphylothermus marinus (strain ATCC 43588 / DSM 3639 / JCM 9404 / F1).